The chain runs to 396 residues: RNA polymerase principal sigma factor HrdA (396 aa).

Residues 1 to 20 (MRGGQRRASRLRPPTYRRRP) are compositionally biased toward basic residues. Positions 1 to 96 (MRGGQRRASR…PTRTESGGPS (96 aa)) are disordered. Low complexity-rich tracts occupy residues 33 to 42 (QTQTLTQTDT) and 56 to 75 (LLAM…PGAP). The Polymerase core binding signature appears at 187 to 200 (DLVQEGNLGLIRAV). Positions 357–376 (LEEIGRLFGVTRERIRQIES) form a DNA-binding region, H-T-H motif.

The protein belongs to the sigma-70 factor family. In terms of assembly, interacts transiently with the RNA polymerase catalytic core. Interacts with RNA polymerase-binding protein RbpA.

Sigma factors are initiation factors that promote the attachment of RNA polymerase to specific initiation sites and are then released. The sequence is that of RNA polymerase principal sigma factor HrdA (hrdA) from Streptomyces coelicolor (strain ATCC BAA-471 / A3(2) / M145).